Here is a 98-residue protein sequence, read N- to C-terminus: NADH-ubiquinone oxidoreductase chain 4L (98 aa).

A run of 3 helical transmembrane segments spans residues 1-21, 29-49, and 61-81; these read MSMVYFNILMAFIVSFVGLLM, SLLCLEGMMLSLFVMMSVTIL, and IILLVFAACEAALGLSLLVMV.

It belongs to the complex I subunit 4L family. In terms of assembly, core subunit of respiratory chain NADH dehydrogenase (Complex I) which is composed of 45 different subunits.

It is found in the mitochondrion inner membrane. It catalyses the reaction a ubiquinone + NADH + 5 H(+)(in) = a ubiquinol + NAD(+) + 4 H(+)(out). In terms of biological role, core subunit of the mitochondrial membrane respiratory chain NADH dehydrogenase (Complex I) which catalyzes electron transfer from NADH through the respiratory chain, using ubiquinone as an electron acceptor. Part of the enzyme membrane arm which is embedded in the lipid bilayer and involved in proton translocation. The polypeptide is NADH-ubiquinone oxidoreductase chain 4L (MT-ND4L) (Eumetopias jubatus (Steller sea lion)).